A 184-amino-acid polypeptide reads, in one-letter code: Gremlin-1 (184 aa).

A signal peptide spans 1–24; it reads MSRTAYTVGALLLLLGTLLPAAEG. Positions 24 to 77 are disordered; the sequence is GKKKGSQGAIPPPDKAQHNDSEQTQSPQQPGSRNRGRGQGRGTAMPGEEVLESS. Residue Asn42 is glycosylated (N-linked (GlcNAc...) asparagine). 4 disulfide bridges follow: Cys94-Cys144, Cys108-Cys158, Cys118-Cys176, and Cys122-Cys178. The CTCK domain occupies 94–184; sequence CKTQPLKQTI…QCRCISIDLD (91 aa).

This sequence belongs to the DAN family. Homodimer; can also form homooligomers. Interacts with BMP2; can form higher oligomers with BMP2. Interacts with SLIT1 and SLIT2 in a glycosylation-dependent manner. As to expression, highly expressed in small intestine, fetal brain and colon. Expression is restricted to intestinal subepithelial myofibroblasts (ISEMFs) at the crypt base. In subjects with HMPS1, by contrast, GREM1 is expressed, not only in basal ISEMFs, but also at very high levels in epithelial cells (predominantly colonocytes), with expression extending most of the way up the sides of the crypt. Weakly expressed in brain, ovary, prostate, pancreas and skeletal muscle. In brain found in the region localized around the internal capsule in the large subcortical nuclei, including caudate, putamen, substantia nigra, thalamus and subthalamus. Predominantly expressed in normal cells including neurons, astrocytes and fibroblasts.

The protein localises to the secreted. Its function is as follows. Cytokine that may play an important role during carcinogenesis and metanephric kidney organogenesis, as a BMP antagonist required for early limb outgrowth and patterning in maintaining the FGF4-SHH feedback loop. Down-regulates the BMP4 signaling in a dose-dependent manner. Antagonist of BMP2; inhibits BMP2-mediated differentiation of osteoblasts (in vitro). Acts as inhibitor of monocyte chemotaxis. Can inhibit the growth or viability of normal cells but not transformed cells when is overexpressed. The protein is Gremlin-1 (GREM1) of Homo sapiens (Human).